A 208-amino-acid chain; its full sequence is ATP-dependent Clp protease proteolytic subunit (208 aa).

The Nucleophile role is filled by Ser-107. The active site involves His-132.

Belongs to the peptidase S14 family. As to quaternary structure, fourteen ClpP subunits assemble into 2 heptameric rings which stack back to back to give a disk-like structure with a central cavity, resembling the structure of eukaryotic proteasomes.

Its subcellular location is the cytoplasm. It catalyses the reaction Hydrolysis of proteins to small peptides in the presence of ATP and magnesium. alpha-casein is the usual test substrate. In the absence of ATP, only oligopeptides shorter than five residues are hydrolyzed (such as succinyl-Leu-Tyr-|-NHMec, and Leu-Tyr-Leu-|-Tyr-Trp, in which cleavage of the -Tyr-|-Leu- and -Tyr-|-Trp bonds also occurs).. In terms of biological role, cleaves peptides in various proteins in a process that requires ATP hydrolysis. Has a chymotrypsin-like activity. Plays a major role in the degradation of misfolded proteins. The chain is ATP-dependent Clp protease proteolytic subunit from Methylobacterium radiotolerans (strain ATCC 27329 / DSM 1819 / JCM 2831 / NBRC 15690 / NCIMB 10815 / 0-1).